A 274-amino-acid chain; its full sequence is Nitrogenase iron protein (274 aa).

Residue 8–15 (GKGGIGKS) coordinates ATP. A [4Fe-4S] cluster-binding site is contributed by C94. At R97 the chain carries ADP-ribosylarginine; by dinitrogenase reductase ADP-ribosyltransferase. C131 serves as a coordination point for [4Fe-4S] cluster.

The protein belongs to the NifH/BchL/ChlL family. Homodimer. [4Fe-4S] cluster is required as a cofactor. Post-translationally, the reversible ADP-ribosylation of Arg-97 inactivates the nitrogenase reductase and regulates nitrogenase activity.

The catalysed reaction is N2 + 8 reduced [2Fe-2S]-[ferredoxin] + 16 ATP + 16 H2O = H2 + 8 oxidized [2Fe-2S]-[ferredoxin] + 2 NH4(+) + 16 ADP + 16 phosphate + 6 H(+). Functionally, the key enzymatic reactions in nitrogen fixation are catalyzed by the nitrogenase complex, which has 2 components: the iron protein and the molybdenum-iron protein. This chain is Nitrogenase iron protein, found in Pelodictyon phaeoclathratiforme (strain DSM 5477 / BU-1).